Consider the following 205-residue polypeptide: Small ribosomal subunit protein uS4 (205 aa).

The interval 18-49 (NIWGRPKSPVNKREYGPGQHGQRRKGKLSDFG) is disordered. The S4 RNA-binding domain maps to 94 to 157 (RRLDAIVYRA…KQLALVLEAN (64 aa)).

This sequence belongs to the universal ribosomal protein uS4 family. In terms of assembly, part of the 30S ribosomal subunit. Contacts protein S5. The interaction surface between S4 and S5 is involved in control of translational fidelity.

In terms of biological role, one of the primary rRNA binding proteins, it binds directly to 16S rRNA where it nucleates assembly of the body of the 30S subunit. With S5 and S12 plays an important role in translational accuracy. This is Small ribosomal subunit protein uS4 from Afipia carboxidovorans (strain ATCC 49405 / DSM 1227 / KCTC 32145 / OM5) (Oligotropha carboxidovorans).